The chain runs to 457 residues: Amidophosphoribosyltransferase (457 aa).

The active-site Nucleophile is cysteine 2. A Glutamine amidotransferase type-2 domain is found at 2–223 (CGVVGIYHPD…PGKAAIIKDG (222 aa)). Cysteine 239 provides a ligand contact to [4Fe-4S] cluster. Serine 286, aspartate 348, and aspartate 349 together coordinate Mg(2+). [4Fe-4S] cluster contacts are provided by cysteine 385, cysteine 438, and cysteine 441.

It in the C-terminal section; belongs to the purine/pyrimidine phosphoribosyltransferase family. The cofactor is Mg(2+). [4Fe-4S] cluster serves as cofactor.

The catalysed reaction is 5-phospho-beta-D-ribosylamine + L-glutamate + diphosphate = 5-phospho-alpha-D-ribose 1-diphosphate + L-glutamine + H2O. It functions in the pathway purine metabolism; IMP biosynthesis via de novo pathway; N(1)-(5-phospho-D-ribosyl)glycinamide from 5-phospho-alpha-D-ribose 1-diphosphate: step 1/2. Functionally, catalyzes the formation of phosphoribosylamine from phosphoribosylpyrophosphate (PRPP) and glutamine. This chain is Amidophosphoribosyltransferase, found in Archaeoglobus fulgidus (strain ATCC 49558 / DSM 4304 / JCM 9628 / NBRC 100126 / VC-16).